Reading from the N-terminus, the 305-residue chain is MQRSNHTVTEFILLGFTTDPGMQLGLFVVFLGVYSLTVVGNSTLIVLICNDSHLHTPMYFVVGNLSFLDLWYSSVYTPKILVICISEDKSISFAGCLCQFFFSAGLAYSECCLLAAMAYDRYVAISKPLLYAQAMSIKLCALLVAVSYCGGFINSSIITKKTFSFNFCCENIIDDFFCDLLPLVKLACGEKGCYKFLMYFLLASNVICPAVLILASYLFIITSVLRISSSQGRLKAFSTCSSHLTSVTLYYGSILYIYALPRSSYSFDMDKIVSTFYTEVLPMLNPMIYSLRNKDVKEALKKLLP.

Residues 1 to 27 (MQRSNHTVTEFILLGFTTDPGMQLGLF) are Extracellular-facing. N-linked (GlcNAc...) asparagine glycosylation is present at N5. A helical transmembrane segment spans residues 28–48 (VVFLGVYSLTVVGNSTLIVLI). Topologically, residues 49-64 (CNDSHLHTPMYFVVGN) are cytoplasmic. Residues 65-85 (LSFLDLWYSSVYTPKILVICI) form a helical membrane-spanning segment. At 86-96 (SEDKSISFAGC) the chain is on the extracellular side. C96 and C178 are disulfide-bonded. The chain crosses the membrane as a helical span at residues 97 to 117 (LCQFFFSAGLAYSECCLLAAM). The Cytoplasmic segment spans residues 118–138 (AYDRYVAISKPLLYAQAMSIK). The chain crosses the membrane as a helical span at residues 139–159 (LCALLVAVSYCGGFINSSIIT). Residues 160 to 200 (KKTFSFNFCCENIIDDFFCDLLPLVKLACGEKGCYKFLMYF) are Extracellular-facing. Residues 201 to 221 (LLASNVICPAVLILASYLFII) form a helical membrane-spanning segment. At 222 to 239 (TSVLRISSSQGRLKAFST) the chain is on the cytoplasmic side. The chain crosses the membrane as a helical span at residues 240 to 260 (CSSHLTSVTLYYGSILYIYAL). At 261-271 (PRSSYSFDMDK) the chain is on the extracellular side. The helical transmembrane segment at 272–291 (IVSTFYTEVLPMLNPMIYSL) threads the bilayer. The Cytoplasmic segment spans residues 292–305 (RNKDVKEALKKLLP).

It belongs to the G-protein coupled receptor 1 family.

It localises to the cell membrane. Its function is as follows. Odorant receptor. The polypeptide is Olfactory receptor 9G9 (OR9G9) (Homo sapiens (Human)).